A 343-amino-acid polypeptide reads, in one-letter code: Arginine N-succinyltransferase (343 aa).

Residue Leu-125 participates in succinyl-CoA binding. The active-site Proton donor is His-229.

It belongs to the arginine N-succinyltransferase family.

It carries out the reaction succinyl-CoA + L-arginine = N(2)-succinyl-L-arginine + CoA + H(+). It participates in amino-acid degradation; L-arginine degradation via AST pathway; L-glutamate and succinate from L-arginine: step 1/5. Functionally, catalyzes the transfer of succinyl-CoA to arginine to produce N(2)-succinylarginine. This Photorhabdus laumondii subsp. laumondii (strain DSM 15139 / CIP 105565 / TT01) (Photorhabdus luminescens subsp. laumondii) protein is Arginine N-succinyltransferase.